A 121-amino-acid polypeptide reads, in one-letter code: NADH-ubiquinone oxidoreductase chain 3 (121 aa).

3 helical membrane passes run 11 to 31 (ILTF…LSYF), 63 to 83 (FYLV…LFPW), and 90 to 110 (LSIF…LGFI).

This sequence belongs to the complex I subunit 3 family.

The protein localises to the mitochondrion membrane. The enzyme catalyses a ubiquinone + NADH + 5 H(+)(in) = a ubiquinol + NAD(+) + 4 H(+)(out). Functionally, core subunit of the mitochondrial membrane respiratory chain NADH dehydrogenase (Complex I) that is believed to belong to the minimal assembly required for catalysis. Complex I functions in the transfer of electrons from NADH to the respiratory chain. The immediate electron acceptor for the enzyme is believed to be ubiquinone. The chain is NADH-ubiquinone oxidoreductase chain 3 (NAD3) from Porphyra purpurea (Red seaweed).